A 30-amino-acid chain; its full sequence is Ornithine carbamoyltransferase (30 aa).

Belongs to the aspartate/ornithine carbamoyltransferase superfamily. OTCase family.

Its subcellular location is the cytoplasm. The enzyme catalyses carbamoyl phosphate + L-ornithine = L-citrulline + phosphate + H(+). It functions in the pathway amino-acid biosynthesis; L-arginine biosynthesis; L-arginine from L-ornithine and carbamoyl phosphate: step 1/3. In terms of biological role, has vitronectin and fibronectin-binding activity. This Staphylococcus epidermidis protein is Ornithine carbamoyltransferase (argF).